Consider the following 534-residue polypeptide: Chaperonin GroEL 3 (534 aa).

Residues 31-34, glycine 416, 479-481, and aspartate 495 contribute to the ATP site; these read TLGP and NAL.

The protein belongs to the chaperonin (HSP60) family. In terms of assembly, forms a cylinder of 14 subunits composed of two heptameric rings stacked back-to-back. Interacts with the co-chaperonin GroES.

Its subcellular location is the cytoplasm. The catalysed reaction is ATP + H2O + a folded polypeptide = ADP + phosphate + an unfolded polypeptide.. Functionally, together with its co-chaperonin GroES, plays an essential role in assisting protein folding. The GroEL-GroES system forms a nano-cage that allows encapsulation of the non-native substrate proteins and provides a physical environment optimized to promote and accelerate protein folding. In Protochlamydia amoebophila (strain UWE25), this protein is Chaperonin GroEL 3.